Consider the following 507-residue polypeptide: MARLLRSATWELFPWRGYCSQKAKGELCRDFVEALKAVVGGSHVSTAAVVREQHGRDESVHRCEPPDAVVWPQNVEQVSRLAALCYRQGVPIIPFGTGTGLEGGVCAVQGGVCVNLTHMDRILELNQEDFSVVVEPGVTRKALNAHLRDSGLWFPVDPGADASLCGMAATGASGTNAVRYGTMRDNVLNLEVVLPDGRLLHTAGRGRHFRFGFWPEIPHHTAWYSPCVSLGRRKSAAGYNLTGLFVGSEGTLGLITATTLRLHPAPEATVAATCAFPSVQAAVDSTVHILQAAVPVARIEFLDEVMMDACNRYSKLNCLVAPTLFLEFHGSQQALEEQLQRTEEIVQQNGASDFSWAKEAEERSRLWTARHNAWYAALATRPGCKGYSTDVCVPISRLPEIVVQTKEDLNASGLTGSIVGHVGDGNFHCILLVNPDDAEELGRVKAFAEQLGRRALALHGTCTGEHGIGMGKRQLLQEEVGAVGVETMRQLKAVLDPQGLMNPGKVL.

Residues 1 to 52 (MARLLRSATWELFPWRGYCSQKAKGELCRDFVEALKAVVGGSHVSTAAVVRE) constitute a mitochondrion transit peptide. K36 is modified (N6-acetyllysine). The FAD-binding PCMH-type domain occupies 62–265 (RCEPPDAVVW…TATTLRLHPA (204 aa)). Residue K315 is modified to N6-acetyllysine. K358 carries the N6-acetyllysine; alternate modification. K358 is subject to N6-succinyllysine; alternate. N6-acetyllysine is present on residues K445 and K472.

This sequence belongs to the FAD-binding oxidoreductase/transferase type 4 family. In terms of assembly, interacts with CSRP3. Requires FAD as cofactor. As to expression, expressed moderately in heart and liver and at lower levels in skeletal muscle and kidney.

Its subcellular location is the mitochondrion. It catalyses the reaction (R)-lactate + 2 Fe(III)-[cytochrome c] = 2 Fe(II)-[cytochrome c] + pyruvate + 2 H(+). Involved in D-lactate, but not L-lactate catabolic process. This chain is Probable D-lactate dehydrogenase, mitochondrial, found in Homo sapiens (Human).